The primary structure comprises 240 residues: Ribonuclease PH (240 aa).

Phosphate is bound by residues Arg87 and 125–127 (GTR).

This sequence belongs to the RNase PH family. As to quaternary structure, homohexameric ring arranged as a trimer of dimers.

The catalysed reaction is tRNA(n+1) + phosphate = tRNA(n) + a ribonucleoside 5'-diphosphate. Functionally, phosphorolytic 3'-5' exoribonuclease that plays an important role in tRNA 3'-end maturation. Removes nucleotide residues following the 3'-CCA terminus of tRNAs; can also add nucleotides to the ends of RNA molecules by using nucleoside diphosphates as substrates, but this may not be physiologically important. Probably plays a role in initiation of 16S rRNA degradation (leading to ribosome degradation) during starvation. This Stutzerimonas stutzeri (strain A1501) (Pseudomonas stutzeri) protein is Ribonuclease PH.